Consider the following 216-residue polypeptide: Octanoyltransferase (216 aa).

In terms of domain architecture, BPL/LPL catalytic spans 33 to 216 (AATADELWIV…ANRLSTSLSR (184 aa)). Residues 72–79 (RGGEVTYH), 148–150 (ALG), and 162–164 (GVS) contribute to the substrate site. The active-site Acyl-thioester intermediate is Cys180.

Belongs to the LipB family.

The protein localises to the cytoplasm. The enzyme catalyses octanoyl-[ACP] + L-lysyl-[protein] = N(6)-octanoyl-L-lysyl-[protein] + holo-[ACP] + H(+). It participates in protein modification; protein lipoylation via endogenous pathway; protein N(6)-(lipoyl)lysine from octanoyl-[acyl-carrier-protein]: step 1/2. Catalyzes the transfer of endogenously produced octanoic acid from octanoyl-acyl-carrier-protein onto the lipoyl domains of lipoate-dependent enzymes. Lipoyl-ACP can also act as a substrate although octanoyl-ACP is likely to be the physiological substrate. This Janthinobacterium sp. (strain Marseille) (Minibacterium massiliensis) protein is Octanoyltransferase.